A 95-amino-acid chain; its full sequence is Aspartyl/glutamyl-tRNA(Asn/Gln) amidotransferase subunit C (95 aa).

This sequence belongs to the GatC family. In terms of assembly, heterotrimer of A, B and C subunits.

The enzyme catalyses L-glutamyl-tRNA(Gln) + L-glutamine + ATP + H2O = L-glutaminyl-tRNA(Gln) + L-glutamate + ADP + phosphate + H(+). It catalyses the reaction L-aspartyl-tRNA(Asn) + L-glutamine + ATP + H2O = L-asparaginyl-tRNA(Asn) + L-glutamate + ADP + phosphate + 2 H(+). Allows the formation of correctly charged Asn-tRNA(Asn) or Gln-tRNA(Gln) through the transamidation of misacylated Asp-tRNA(Asn) or Glu-tRNA(Gln) in organisms which lack either or both of asparaginyl-tRNA or glutaminyl-tRNA synthetases. The reaction takes place in the presence of glutamine and ATP through an activated phospho-Asp-tRNA(Asn) or phospho-Glu-tRNA(Gln). The protein is Aspartyl/glutamyl-tRNA(Asn/Gln) amidotransferase subunit C of Nitrosomonas europaea (strain ATCC 19718 / CIP 103999 / KCTC 2705 / NBRC 14298).